Reading from the N-terminus, the 660-residue chain is MADNSGTEGEEEDCSEAERAGGWFMVEAIVDRRTGDTISSDEDEEDEGEDMVDFIDDRPIGDGQEVAQELLLQQAAADDDEAVHTVKRKFAPSPYFSPVCVPSIEHELSPRLDAIKLGRQSSKAKRRLFQLPDSGYGQTQVDTDTGPSQVQDGCETGDQNGRQQYKEGSGTKDGENGSQEEERAGGDGEESQPLSTETEKGACGVLSILKASNQKATLLGKFKEQFGLGYNELVRHFKSSRTACVDWVVCVFGVYCTVAEGIKQLIQPLCEYAHIQVLPCQWGMTVLMLVRYKRAKNRETVAKGLSTLLNVPESHMLIEPPKLRSSPAALYWYKTSMSNISDVYGETPEWIVRQTMVGHALQEVQFSLSEMVQWAYDHDITDEGTLAYEYALIADVDSNAAAFLASNCQAKYVKDACTMCRHYKRGEQARMSMSEWIRFRSNKVQGEGDWKPIVHFLRYQNVEFIPFLCAFKLFLQGIPKKSCLVFYGPADTGKSYFCMSLLKFMGGVVISYANSHSHFWLQPLSEAKMGLLDDATSQCWSYVDTYLRNALDGNVMCIDRKHRSLLQLKCPPLLITTNVNPLEDDRWKYLRSRLQVFTFSNPCPLTSKGEPVYTLNDQNWKSFFQRLWARLSLTDPDDEEENGEPSEPFRCVPGQNTRTV.

The tract at residues 1-60 (MADNSGTEGEEEDCSEAERAGGWFMVEAIVDRRTGDTISSDEDEEDEGEDMVDFIDDRPI) is disordered. The segment covering 39-54 (SSDEDEEDEGEDMVDF) has biased composition (acidic residues). Residues 87–89 (KRK) carry the Nuclear localization signal motif. A phosphoserine; by host mark is found at S93, S97, S109, and S122. The short motif at 108-117 (LSPRLDAIKL) is the Nuclear export signal element. Positions 128-196 (LFQLPDSGYG…DGEESQPLST (69 aa)) are disordered. Residues 136–163 (YGQTQVDTDTGPSQVQDGCETGDQNGRQ) show a composition bias toward polar residues. Positions 169 to 186 (SGTKDGENGSQEEERAGG) are enriched in basic and acidic residues. Residues 197–363 (ETEKGACGVL…QTMVGHALQE (167 aa)) form a DNA-binding region region. The region spanning 462-612 (VEFIPFLCAF…CPLTSKGEPV (151 aa)) is the SF3 helicase domain. Residue 488–495 (GPADTGKS) participates in ATP binding. A Glycyl lysine isopeptide (Lys-Gly) (interchain with G-Cter in SUMO) cross-link involves residue K569. Positions 635–644 (DPDDEEENGE) are enriched in acidic residues. The tract at residues 635-660 (DPDDEEENGEPSEPFRCVPGQNTRTV) is disordered.

It belongs to the papillomaviridae E1 protein family. Can form hexamers. Interacts with E2 protein; this interaction increases E1 DNA binding specificity. Interacts with host DNA polymerase subunit POLA2. Interacts with host single stranded DNA-binding protein RPA1. Interacts with host TOP1; this interaction stimulates the enzymatic activity of TOP1. Phosphorylated. In terms of processing, sumoylated.

The protein resides in the host nucleus. It carries out the reaction Couples ATP hydrolysis with the unwinding of duplex DNA by translocating in the 3'-5' direction.. It catalyses the reaction ATP + H2O = ADP + phosphate + H(+). Its function is as follows. ATP-dependent DNA 3'-5' helicase required for initiation of viral DNA replication. It forms a complex with the viral E2 protein. The E1-E2 complex binds to the replication origin which contains binding sites for both proteins. During the initial step, a dimer of E1 interacts with a dimer of protein E2 leading to a complex that binds the viral origin of replication with high specificity. Then, a second dimer of E1 displaces the E2 dimer in an ATP-dependent manner to form the E1 tetramer. Following this, two E1 monomers are added to each half of the site, which results in the formation of two E1 trimers on the viral ori. Subsequently, two hexamers will be created. The double hexamer acts as a bi-directional helicase machinery and unwinds the viral DNA and then recruits the host DNA polymerase to start replication. This Human papillomavirus 29 protein is Replication protein E1.